The chain runs to 861 residues: Bifunctional uridylyltransferase/uridylyl-removing enzyme (861 aa).

Positions 1-322 (MHTAAAATPA…FPTELGITRT (322 aa)) are uridylyltransferase. Positions 323–679 (INGRFVERQG…ARISPVGEGL (357 aa)) are uridylyl-removing. The HD domain maps to 441 to 557 (VDQHILMVVR…RHFADQVGSE (117 aa)). ACT domains lie at 680–763 (QVAV…AEPP) and 792–861 (LLSL…ALAI).

Belongs to the GlnD family. Mg(2+) serves as cofactor.

The enzyme catalyses [protein-PII]-L-tyrosine + UTP = [protein-PII]-uridylyl-L-tyrosine + diphosphate. It carries out the reaction [protein-PII]-uridylyl-L-tyrosine + H2O = [protein-PII]-L-tyrosine + UMP + H(+). With respect to regulation, uridylyltransferase (UTase) activity is inhibited by glutamine, while glutamine activates uridylyl-removing (UR) activity. Its function is as follows. Modifies, by uridylylation and deuridylylation, the PII regulatory proteins (GlnB and homologs), in response to the nitrogen status of the cell that GlnD senses through the glutamine level. Under low glutamine levels, catalyzes the conversion of the PII proteins and UTP to PII-UMP and PPi, while under higher glutamine levels, GlnD hydrolyzes PII-UMP to PII and UMP (deuridylylation). Thus, controls uridylylation state and activity of the PII proteins, and plays an important role in the regulation of nitrogen assimilation and metabolism. This chain is Bifunctional uridylyltransferase/uridylyl-removing enzyme, found in Ralstonia nicotianae (strain ATCC BAA-1114 / GMI1000) (Ralstonia solanacearum).